The following is a 102-amino-acid chain: Protein PAPPAS (102 aa).

A run of 2 helical transmembrane segments spans residues 13-33 (LFLT…FVKW) and 82-102 (IGSD…FFFF).

In terms of tissue distribution, expressed in placenta with lower expression in brain, kidney and testis.

It is found in the endoplasmic reticulum membrane. In Homo sapiens (Human), this protein is Protein PAPPAS (PAPPA-AS1).